Here is a 361-residue protein sequence, read N- to C-terminus: Holliday junction branch migration complex subunit RuvB (361 aa).

Composition is skewed to polar residues over residues 1–15 (MAIK…SPNV) and 28–40 (ERST…QQEA). The interval 1 to 41 (MAIKRSGNNNLSPNVKSDLLSPEVIPQERSTSPELEQQEAS) is disordered. The large ATPase domain (RuvB-L) stretch occupies residues 13 to 203 (PNVKSDLLSP…FGLIQRLRFY (191 aa)). Residues leucine 42, arginine 43, glycine 84, lysine 87, threonine 88, threonine 89, 150-152 (EDF), arginine 193, tyrosine 203, and arginine 240 each bind ATP. Residue threonine 88 participates in Mg(2+) binding. A small ATPAse domain (RuvB-S) region spans residues 204–274 (EVDELQQIIL…LASEALDLYQ (71 aa)). Residues 277-361 (KRGLDWTDRL…PTPLLPWKES (85 aa)) form a head domain (RuvB-H) region. Positions 332 and 337 each coordinate DNA.

The protein belongs to the RuvB family. As to quaternary structure, homohexamer. Forms an RuvA(8)-RuvB(12)-Holliday junction (HJ) complex. HJ DNA is sandwiched between 2 RuvA tetramers; dsDNA enters through RuvA and exits via RuvB. An RuvB hexamer assembles on each DNA strand where it exits the tetramer. Each RuvB hexamer is contacted by two RuvA subunits (via domain III) on 2 adjacent RuvB subunits; this complex drives branch migration. In the full resolvosome a probable DNA-RuvA(4)-RuvB(12)-RuvC(2) complex forms which resolves the HJ.

It localises to the cytoplasm. It catalyses the reaction ATP + H2O = ADP + phosphate + H(+). The RuvA-RuvB-RuvC complex processes Holliday junction (HJ) DNA during genetic recombination and DNA repair, while the RuvA-RuvB complex plays an important role in the rescue of blocked DNA replication forks via replication fork reversal (RFR). RuvA specifically binds to HJ cruciform DNA, conferring on it an open structure. The RuvB hexamer acts as an ATP-dependent pump, pulling dsDNA into and through the RuvAB complex. RuvB forms 2 homohexamers on either side of HJ DNA bound by 1 or 2 RuvA tetramers; 4 subunits per hexamer contact DNA at a time. Coordinated motions by a converter formed by DNA-disengaged RuvB subunits stimulates ATP hydrolysis and nucleotide exchange. Immobilization of the converter enables RuvB to convert the ATP-contained energy into a lever motion, pulling 2 nucleotides of DNA out of the RuvA tetramer per ATP hydrolyzed, thus driving DNA branch migration. The RuvB motors rotate together with the DNA substrate, which together with the progressing nucleotide cycle form the mechanistic basis for DNA recombination by continuous HJ branch migration. Branch migration allows RuvC to scan DNA until it finds its consensus sequence, where it cleaves and resolves cruciform DNA. In terms of biological role, participates in UV-tolerance of Synechocystis PCC 6803. This Synechocystis sp. (strain ATCC 27184 / PCC 6803 / Kazusa) protein is Holliday junction branch migration complex subunit RuvB.